A 2025-amino-acid chain; its full sequence is E3 ubiquitin-protein ligase TRIP12 (2025 aa).

The segment covering 1–10 (MSNRPNNNPG) has biased composition (polar residues). The disordered stretch occupies residues 1 to 404 (MSNRPNNNPG…SGESESDDSE (404 aa)). At Ser2 the chain carries N-acetylserine. A Phosphoserine modification is found at Ser12. The span at 18-27 (RNTAGAQPQD) shows a compositional bias: polar residues. The span at 48–70 (DPDRANTSERQKTGQVPKKDNSR) shows a compositional bias: basic and acidic residues. Phosphoserine is present on residues Ser77, Ser85, and Ser100. Over residues 78–88 (PDYNRTNSPSS) the composition is skewed to polar residues. The span at 119–132 (EQQLKSAQLPSTSK) shows a compositional bias: polar residues. Composition is skewed to low complexity over residues 154–166 (SSCV…SEST) and 177–215 (KLAS…ASST). Lys181 is modified (N6-acetyllysine). Over residues 280 to 290 (PGSSKSETSKP) the composition is skewed to polar residues. Phosphoserine is present on residues Ser310 and Ser312. Positions 326 to 338 (QKTTGSCASTSRR) are enriched in polar residues. Positions 346–358 (GAAEARRQEKMAD) are enriched in basic and acidic residues. Residues 360–371 (ESNQETVNSSAA) are compositionally biased toward polar residues. The span at 379-397 (GAAASSSVAGAVGMTTSGE) shows a compositional bias: low complexity. The 115-residue stretch at 755 to 869 (MLKKGNAQNT…DPELAKSFIK (115 aa)) folds into the WWE domain. A disordered region spans residues 970–1077 (ESLLTSPPKA…QSPKSSFLAS (108 aa)). Residue Ser975 is modified to Phosphoserine. The span at 983 to 1006 (GSGSLGSTTPASSGTATAATNASA) shows a compositional bias: low complexity. 2 positions are modified to phosphoserine: Ser1024 and Ser1030. A compositionally biased stretch (basic residues) spans 1034-1047 (KRKRLPKRGPRRPK). Residue Ser1049 is modified to Phosphoserine. Residues 1050 to 1059 (PPRDDDKVDN) show a composition bias toward basic and acidic residues. Positions 1062 to 1073 (KSPTTTQSPKSS) are enriched in low complexity. Ser1063, Ser1350, Ser1355, Ser1362, and Ser1409 each carry phosphoserine. A Phosphothreonine modification is found at Thr1410. Disordered stretches follow at residues 1441-1466 (TKDC…NAKK) and 1601-1620 (TNPE…PRLD). Lys1458 bears the N6-acetyllysine mark. Ser1460 carries the phosphoserine modification. The tract at residues 1529-1603 (EIIPTSEFIN…AMQRLLDTNP (75 aa)) is K-box. In terms of domain architecture, HECT spans 1918–2025 (PDHGYTHDSR…REGQQSFHLS (108 aa)). Cys1992 (glycyl thioester intermediate) is an active-site residue.

Belongs to the UPL family. K-HECT subfamily. Interacts with MYC; leading to disrupt interaction with isoform p19ARF/ARF of CDKN2A. Interacts with TRADD; leading to disrupt interaction with isoform p19ARF/ARF of CDKN2A. Interacts with SMARCC1; leading to disrupt interaction with SMARCE1.

Its subcellular location is the nucleus. The protein localises to the nucleoplasm. It catalyses the reaction S-ubiquitinyl-[E2 ubiquitin-conjugating enzyme]-L-cysteine + [acceptor protein]-L-lysine = [E2 ubiquitin-conjugating enzyme]-L-cysteine + N(6)-ubiquitinyl-[acceptor protein]-L-lysine.. It functions in the pathway protein modification; protein ubiquitination. In terms of biological role, E3 ubiquitin-protein ligase involved in ubiquitin fusion degradation (UFD) pathway and regulation of DNA repair. Part of the ubiquitin fusion degradation (UFD) pathway, a process that mediates ubiquitination of protein at their N-terminus, regardless of the presence of lysine residues in target proteins. Acts as a key regulator of DNA damage response by acting as a suppressor of RNF168, an E3 ubiquitin-protein ligase that promotes accumulation of 'Lys-63'-linked histone H2A and H2AX at DNA damage sites, thereby acting as a guard against excessive spreading of ubiquitinated chromatin at damaged chromosomes. In normal cells, mediates ubiquitination and degradation of isoform p19ARF/ARF of CDKN2A, a lysine-less tumor suppressor required for p53/TP53 activation under oncogenic stress. In cancer cells, however, isoform p19ARF/ARF and TRIP12 are located in different cell compartments, preventing isoform p19ARF/ARF ubiquitination and degradation. Does not mediate ubiquitination of isoform p16-INK4a of CDKN2A. Also catalyzes ubiquitination of NAE1 and SMARCE1, leading to their degradation. Ubiquitination and degradation of target proteins is regulated by interaction with proteins such as MYC, TRADD or SMARCC1, which disrupt the interaction between TRIP12 and target proteins. Mediates ubiquitination of ASXL1: following binding to N(6)-methyladenosine methylated DNA, ASXL1 is ubiquitinated by TRIP12, leading to its degradation and subsequent inactivation of the PR-DUB complex. The polypeptide is E3 ubiquitin-protein ligase TRIP12 (Trip12) (Mus musculus (Mouse)).